Consider the following 175-residue polypeptide: Austinoid biosynthesis cluster protein F (175 aa).

This sequence belongs to the trt14 isomerase family. As to quaternary structure, homodimer.

It participates in secondary metabolite biosynthesis; terpenoid biosynthesis. In terms of biological role, part of the gene cluster that mediates the biosynthesis of calidodehydroaustin, a fungal meroterpenoid. The first step of the pathway is the synthesis of 3,5-dimethylorsellinic acid by the polyketide synthase ausA. 3,5-dimethylorsellinic acid is then prenylated by the polyprenyl transferase ausN. Further epoxidation by the FAD-dependent monooxygenase ausM and cyclization by the probable terpene cyclase ausL lead to the formation of protoaustinoid A. Protoaustinoid A is then oxidized to spiro-lactone preaustinoid A3 by the combined action of the FAD-binding monooxygenases ausB and ausC, and the dioxygenase ausE. Acid-catalyzed keto-rearrangement and ring contraction of the tetraketide portion of preaustinoid A3 by ausJ lead to the formation of preaustinoid A4. The aldo-keto reductase ausK, with the help of ausH, is involved in the next step by transforming preaustinoid A4 into isoaustinone which is in turn hydroxylated by the P450 monooxygenase ausI to form austinolide. The cytochrome P450 monooxygenase ausG modifies austinolide to austinol. Austinol is further acetylated to austin by the O-acetyltransferase ausP, which spontaneously changes to dehydroaustin. The cytochrome P450 monooxygenase ausR then converts dehydroaustin is into 7-dehydrodehydroaustin. The hydroxylation catalyzed by ausR permits the O-acetyltransferase ausQ to add an additional acetyl group to the molecule, leading to the formation of acetoxydehydroaustin. The short chain dehydrogenase ausT catalyzes the reduction of the double bond present between carbon atoms 1 and 2 to convert 7-dehydrodehydroaustin into 1,2-dihydro-7-hydroxydehydroaustin. AusQ catalyzes not only an acetylation reaction but also the addition of the PKS ausV diketide product to 1,2-dihydro-7-hydroxydehydroaustin, forming precalidodehydroaustin. Finally, the iron/alpha-ketoglutarate-dependent dioxygenase converts precalidodehydroaustin into calidodehydroaustin. In Aspergillus calidoustus, this protein is Austinoid biosynthesis cluster protein F.